Here is a 334-residue protein sequence, read N- to C-terminus: NADH-ubiquinone oxidoreductase chain 1 (334 aa).

Transmembrane regions (helical) follow at residues 4 to 24 (FVFLMIIETIHIILKILIIVI), 82 to 102 (FIYVAAPVLSFTLALIAWGVI), 115 to 135 (IGILFTLAVSSISVYAILMSG), 161 to 181 (IGLIIITVILCVGSLNITEIV), 187 to 207 (GIWFFFPLFPVAMMFFASALA), 222 to 242 (ELVSGYNVEYASMSFALFFLA), 247 to 267 (IILMSCLTTILFLGGWLSPIV), 268 to 288 (FFKGGPAWFGLKTSFIILLFI), and 311 to 331 (LPLSLAFVVLVASLLFGLNGL).

It belongs to the complex I subunit 1 family.

Its subcellular location is the mitochondrion inner membrane. It carries out the reaction a ubiquinone + NADH + 5 H(+)(in) = a ubiquinol + NAD(+) + 4 H(+)(out). Functionally, core subunit of the mitochondrial membrane respiratory chain NADH dehydrogenase (Complex I) that is believed to belong to the minimal assembly required for catalysis. Complex I functions in the transfer of electrons from NADH to the respiratory chain. The immediate electron acceptor for the enzyme is believed to be ubiquinone. The protein is NADH-ubiquinone oxidoreductase chain 1 (ND1) of Metridium senile (Brown sea anemone).